A 518-amino-acid polypeptide reads, in one-letter code: Membrane-bound lytic murein transglycosylase F (518 aa).

An N-terminal signal peptide occupies residues methionine 1–alanine 21. A non-LT domain region spans residues leucine 22–glycine 269. Positions aspartate 270 to asparagine 518 are LT domain. Residue glutamate 314 is part of the active site.

This sequence in the N-terminal section; belongs to the bacterial solute-binding protein 3 family. The protein in the C-terminal section; belongs to the transglycosylase Slt family.

Its subcellular location is the cell outer membrane. The catalysed reaction is Exolytic cleavage of the (1-&gt;4)-beta-glycosidic linkage between N-acetylmuramic acid (MurNAc) and N-acetylglucosamine (GlcNAc) residues in peptidoglycan, from either the reducing or the non-reducing ends of the peptidoglycan chains, with concomitant formation of a 1,6-anhydrobond in the MurNAc residue.. In terms of biological role, murein-degrading enzyme that degrades murein glycan strands and insoluble, high-molecular weight murein sacculi, with the concomitant formation of a 1,6-anhydromuramoyl product. Lytic transglycosylases (LTs) play an integral role in the metabolism of the peptidoglycan (PG) sacculus. Their lytic action creates space within the PG sacculus to allow for its expansion as well as for the insertion of various structures such as secretion systems and flagella. The chain is Membrane-bound lytic murein transglycosylase F from Escherichia coli O157:H7.